Here is a 98-residue protein sequence, read N- to C-terminus: Gibberellin-regulated protein 1 (98 aa).

Positions 1-23 (MAISKALIASLLISLLVLQLVQA) are cleaved as a signal peptide.

The protein belongs to the GASA family. Post-translationally, six disulfide bonds may be present. As to expression, expressed in flower buds, style, stamen filaments, vasculature of sepals, flower abscission zone and green siliques. Lower levels seen in the root phloem, cotyledons and vasculature of rosette leaves.

It is found in the secreted. In terms of biological role, gibberellin-regulated protein that may function in hormonal controlled steps of development such as seed germination, flowering and seed maturation. The sequence is that of Gibberellin-regulated protein 1 (GASA1) from Arabidopsis thaliana (Mouse-ear cress).